The sequence spans 1218 residues: Thrombospondin type 1 domain-containing protein (1218 aa).

Disordered regions lie at residues 82–101 (SAGF…PCSS), 189–240 (SLEE…SRTR), 298–383 (HTAN…VNGL), and 445–471 (GGKS…SHRG). Residues 201–210 (GYEEERERRS) are compositionally biased toward basic and acidic residues. A compositionally biased stretch (low complexity) spans 315–375 (SSRFTSKASS…SSPLSSSPDS (61 aa)). One can recognise a TSP type-1 domain in the interval 638–704 (SCITGPWSEW…RRKCNLGACP (67 aa)). A helical membrane pass occupies residues 886 to 906 (GVSHLWISLCAGAVAAVVFLV). The segment at 1129–1153 (RRRARRGRREGDSGEGGDCGEARKA) is disordered.

In terms of assembly, component of a complex, at least composed of cysteine repeat modular protein A (CRMPa), cysteine repeat modular protein B (CRMPb), micronemal protein 15 (MIC15) and thrombospondin type 1 domain-containing protein (TSP1).

It localises to the membrane. Functionally, required for rhoptry secretion. Plays a role in host cell invasion. In Toxoplasma gondii, this protein is Thrombospondin type 1 domain-containing protein.